The sequence spans 170 residues: RNA polymerase sigma factor TcsR (170 aa).

A sigma-70 factor domain-4 region spans residues 122-169 (IKDLTQNEKNILRKIYLHGLRESEISRELNISRQAVNKTHLRALEKLK). The H-T-H motif DNA-binding region spans 143 to 162 (ESEISRELNISRQAVNKTHL).

It belongs to the sigma-70 factor family.

Functionally, sigma factors are initiation factors that promote the attachment of RNA polymerase to specific initiation sites and are then released. Transcriptional regulator specifically required to activate expression of the toxin gene locus, composed of tcsL and tcdE/utxA. This is RNA polymerase sigma factor TcsR from Paraclostridium sordellii (strain ATCC 9714 / DSM 2141 / JCM 3814 / LMG 15708 / NCIMB 10717 / 211) (Clostridium sordellii).